The following is a 232-amino-acid chain: Purine nucleoside phosphorylase DeoD-type (232 aa).

A purine D-ribonucleoside is bound at residue His-4. Residues Gly-20, Arg-24, Arg-43, and 87 to 90 (RVGS) contribute to the phosphate site. A purine D-ribonucleoside contacts are provided by residues Glu-162, 178–180 (EME), and 202–203 (SD). Asp-203 acts as the Proton donor in catalysis.

This sequence belongs to the PNP/UDP phosphorylase family. In terms of assembly, homohexamer; trimer of homodimers.

It carries out the reaction a purine D-ribonucleoside + phosphate = a purine nucleobase + alpha-D-ribose 1-phosphate. It catalyses the reaction a purine 2'-deoxy-D-ribonucleoside + phosphate = a purine nucleobase + 2-deoxy-alpha-D-ribose 1-phosphate. In terms of biological role, catalyzes the reversible phosphorolytic breakdown of the N-glycosidic bond in the beta-(deoxy)ribonucleoside molecules, with the formation of the corresponding free purine bases and pentose-1-phosphate. This is Purine nucleoside phosphorylase DeoD-type from Bacillus velezensis (strain DSM 23117 / BGSC 10A6 / LMG 26770 / FZB42) (Bacillus amyloliquefaciens subsp. plantarum).